The chain runs to 164 residues: NADH-quinone oxidoreductase subunit I (164 aa).

4Fe-4S ferredoxin-type domains follow at residues 56–85 (RRYE…IEAE) and 95–124 (TRYD…EGPN). The [4Fe-4S] cluster site is built by C65, C68, C71, C75, C104, C107, C110, and C114.

This sequence belongs to the complex I 23 kDa subunit family. NDH-1 is composed of 14 different subunits. Subunits NuoA, H, J, K, L, M, N constitute the membrane sector of the complex. Requires [4Fe-4S] cluster as cofactor.

It is found in the cell inner membrane. The catalysed reaction is a quinone + NADH + 5 H(+)(in) = a quinol + NAD(+) + 4 H(+)(out). In terms of biological role, NDH-1 shuttles electrons from NADH, via FMN and iron-sulfur (Fe-S) centers, to quinones in the respiratory chain. The immediate electron acceptor for the enzyme in this species is believed to be ubiquinone. Couples the redox reaction to proton translocation (for every two electrons transferred, four hydrogen ions are translocated across the cytoplasmic membrane), and thus conserves the redox energy in a proton gradient. The polypeptide is NADH-quinone oxidoreductase subunit I (Anaplasma phagocytophilum (strain HZ)).